Reading from the N-terminus, the 290-residue chain is Ciliary microtubule inner protein 6 (290 aa).

The tract at residues 76–112 (ENQGDWWPHGKGLENPFQPPYDTKSTQRSDFKKPTCP) is disordered. Mn regions lie at residues 128 to 160 (GIVPLVSPDASAELQRNFKEHISFIHQYDARKT) and 213 to 246 (SAESKMISPGLCRQNSQELLETKTHLSETDIRVA). A disordered region spans residues 197–228 (SGSCSSEQSKKTEKGNSAESKMISPGLCRQNS).

It localises to the cell projection. The protein localises to the cilium. This is Ciliary microtubule inner protein 6 (CIMIP6) from Bos taurus (Bovine).